The chain runs to 973 residues: Serine/threonine-protein kinase atg1 (973 aa).

Residues 23 to 328 enclose the Protein kinase domain; it reads YTRLDEIGRG…FPDFFQNGVI (306 aa). ATP-binding positions include 29 to 37 and Lys-52; that span reads IGRGSFATV. Asp-166 functions as the Proton acceptor in the catalytic mechanism. Disordered stretches follow at residues 338–446, 460–482, 523–587, and 949–973; these read DDLP…PGRQ, RQKGRNTFSEGSPQIDRQADKLR, GNIS…QSPT, and PTPSANVPSKMASSNPVSVGATPPK. Positions 387-407 are enriched in polar residues; sequence GLTQRPPSQNQRFGTPQTTTP. Residues 523–537 are compositionally biased toward polar residues; sequence GNISRGAQTGALSRR. The span at 566-582 shows a compositional bias: basic and acidic residues; sequence SRADSMHNRQGSYERRY. Positions 951 to 965 are enriched in polar residues; that stretch reads PSANVPSKMASSNPV.

This sequence belongs to the protein kinase superfamily. Ser/Thr protein kinase family. APG1/unc-51/ULK1 subfamily. As to quaternary structure, homodimer. Forms a ternary complex with ATG13 and ATG17.

The protein localises to the cytoplasm. It localises to the preautophagosomal structure membrane. The enzyme catalyses L-seryl-[protein] + ATP = O-phospho-L-seryl-[protein] + ADP + H(+). It carries out the reaction L-threonyl-[protein] + ATP = O-phospho-L-threonyl-[protein] + ADP + H(+). Serine/threonine protein kinase involved in the cytoplasm to vacuole transport (Cvt) and found to be essential in autophagy, where it is required for the formation of autophagosomes. Involved in the clearance of protein aggregates which cannot be efficiently cleared by the proteasome. Required for selective autophagic degradation of the nucleus (nucleophagy) as well as for mitophagy which contributes to regulate mitochondrial quantity and quality by eliminating the mitochondria to a basal level to fulfill cellular energy requirements and preventing excess ROS production. Also involved in endoplasmic reticulum-specific autophagic process, in selective removal of ER-associated degradation (ERAD) substrates. Plays a key role in ATG9 and ATG23 cycling through the pre-autophagosomal structure and is necessary to promote ATG18 binding to ATG9 through phosphorylation of ATG9. Catalyzes phosphorylation of ATG4, decreasing the interaction between ATG4 and ATG8 and impairing deconjugation of PE-conjugated forms of ATG8. The protein is Serine/threonine-protein kinase atg1 of Aspergillus fumigatus (strain ATCC MYA-4609 / CBS 101355 / FGSC A1100 / Af293) (Neosartorya fumigata).